Consider the following 189-residue polypeptide: CDP-archaeol synthase (189 aa).

The next 5 helical transmembrane spans lie at 6–26, 71–91, 96–116, 125–145, and 162–184; these read VAIA…AVLA, GVVL…TVGV, IAAA…ASFL, GAAF…ALTA, and VAIF…AFGL.

It belongs to the CDP-archaeol synthase family. Mg(2+) is required as a cofactor.

The protein localises to the cell membrane. It carries out the reaction 2,3-bis-O-(geranylgeranyl)-sn-glycerol 1-phosphate + CTP + H(+) = CDP-2,3-bis-O-(geranylgeranyl)-sn-glycerol + diphosphate. It functions in the pathway membrane lipid metabolism; glycerophospholipid metabolism. Functionally, catalyzes the formation of CDP-2,3-bis-(O-geranylgeranyl)-sn-glycerol (CDP-archaeol) from 2,3-bis-(O-geranylgeranyl)-sn-glycerol 1-phosphate (DGGGP) and CTP. This reaction is the third ether-bond-formation step in the biosynthesis of archaeal membrane lipids. The protein is CDP-archaeol synthase of Natronomonas pharaonis (strain ATCC 35678 / DSM 2160 / CIP 103997 / JCM 8858 / NBRC 14720 / NCIMB 2260 / Gabara) (Halobacterium pharaonis).